Consider the following 165-residue polypeptide: Protein C2-DOMAIN ABA-RELATED 7 (165 aa).

N-acetylmethionine is present on Met1. The C2 domain occupies 1–106 (MEELVGLLRI…HKMGLQELPD (106 aa)). Ca(2+) contacts are provided by Arg21, Asp22, Asp27, Asp73, Lys74, Asp75, and Asp81.

This sequence belongs to the plant CAR protein family. As to quaternary structure, binds to PYR/PYL/RCAR abscisic acid intracellular receptors in an ABA-independent manner, both at the plasma membrane and in the nucleus.

The protein resides in the cell membrane. The protein localises to the nucleus. Stimulates the GTPase/ATPase activities of Obg-like ATPases. Mediates the transient calcium-dependent interaction of PYR/PYL/RCAR abscisic acid (ABA) receptors with the plasma membrane and thus regulates ABA sensitivity. The polypeptide is Protein C2-DOMAIN ABA-RELATED 7 (Arabidopsis thaliana (Mouse-ear cress)).